We begin with the raw amino-acid sequence, 287 residues long: 4-diphosphocytidyl-2-C-methyl-D-erythritol kinase (287 aa).

K10 is an active-site residue. Residue 92-102 (PLAAGLAGGSA) coordinates ATP. Residue D134 is part of the active site.

This sequence belongs to the GHMP kinase family. IspE subfamily.

The enzyme catalyses 4-CDP-2-C-methyl-D-erythritol + ATP = 4-CDP-2-C-methyl-D-erythritol 2-phosphate + ADP + H(+). It participates in isoprenoid biosynthesis; isopentenyl diphosphate biosynthesis via DXP pathway; isopentenyl diphosphate from 1-deoxy-D-xylulose 5-phosphate: step 3/6. Its function is as follows. Catalyzes the phosphorylation of the position 2 hydroxy group of 4-diphosphocytidyl-2C-methyl-D-erythritol. The sequence is that of 4-diphosphocytidyl-2-C-methyl-D-erythritol kinase from Caldanaerobacter subterraneus subsp. tengcongensis (strain DSM 15242 / JCM 11007 / NBRC 100824 / MB4) (Thermoanaerobacter tengcongensis).